A 374-amino-acid polypeptide reads, in one-letter code: MSVPAFIDITEEDQAAELRAYLKSKGAEISEENSEGGLHVDLAQIIEVCDVCLKEDDKDVESVMNSVVSLLLILEPDKQEALIESLCEKLVKFREGERPSLRLQLLSNLFHGMDKNTPVRYTVYCSLLKVASSCGAIQYIPTELDQVRKWISDWNLSTDKKHTLLRLLYDVLVDCKKSDTAAKVMVELLGSYTEDNASQARVDAHRCIVRALKDPNTFLFDHLLALKPVKFLEGELIHDLLTIFVSAKLVSYVKFYQNNKDFIDSLGLLHEQNMAKMRLLTFMGMAVENKEISFDTMQQELQIGADDVEAFVIDAVKTKMVYCKIDQTQRKVVVSHSTHRTFGKQQWQQLYDTLNTWKQNLNQVKNSLLSLSDT.

The PCI domain maps to 180 to 339 (TAAKVMVELL…RKVVVSHSTH (160 aa)).

Belongs to the eIF-3 subunit M family. In terms of assembly, component of the eukaryotic translation initiation factor 3 (eIF-3) complex, which is composed of 13 subunits: EIF3A, EIF3B, EIF3C, EIF3D, EIF3E, EIF3F, EIF3G, EIF3H, EIF3I, EIF3J, EIF3K, EIF3L and EIF3M.

It is found in the cytoplasm. Component of the eukaryotic translation initiation factor 3 (eIF-3) complex, which is involved in protein synthesis of a specialized repertoire of mRNAs and, together with other initiation factors, stimulates binding of mRNA and methionyl-tRNAi to the 40S ribosome. The eIF-3 complex specifically targets and initiates translation of a subset of mRNAs involved in cell proliferation. This is Eukaryotic translation initiation factor 3 subunit M from Gallus gallus (Chicken).